The primary structure comprises 120 residues: Chaperonin GroEL (120 aa).

An ATP-binding site is contributed by 23-27 (DGTTT).

This sequence belongs to the chaperonin (HSP60) family. As to quaternary structure, forms a cylinder of 14 subunits composed of two heptameric rings stacked back-to-back. Interacts with the co-chaperonin GroES.

It localises to the cytoplasm. It carries out the reaction ATP + H2O + a folded polypeptide = ADP + phosphate + an unfolded polypeptide.. Together with its co-chaperonin GroES, plays an essential role in assisting protein folding. The GroEL-GroES system forms a nano-cage that allows encapsulation of the non-native substrate proteins and provides a physical environment optimized to promote and accelerate protein folding. The sequence is that of Chaperonin GroEL from Mycolicibacterium pulveris (Mycobacterium pulveris).